The primary structure comprises 1528 residues: MDSYFKAAVSGLDKLLDDFEQNPDKQDYLPDAYAFNQCSVSSESASPQLALLSKDQRCISTCASSEACCEDANETFLEGKIHEGLTSRPNEKNVAGLDLLSSVDASTSDEIQPSCMRRCSKPVCDLISDMGNLVHATNSEEDIKQLLPDDPKSSADTLITLDSSSVSEALTVSSVDCGSNAVREEQNNINAGIKNRDISIKELGVKVDMALFDSCKYNRTENLKDKIISNELETVDFDMPSVLMEQSSEMSNTKDNPQYKRLPCELLKDDGCLAEEKVAVAVNNTECLEEGGGSNTIAMPCKLPENEGISPSDPASKDENFKLPDFPLQENRTSVFMKQTVKEDSRNLDLKDNNDIVHVSGDDVPPSLSCLSLSGSLCGSLIHNNEHSDILPPNESEGQNNDAVTIHEEIQKSDVLDGETDLSKKETCRSIFLQPVNEKKGEGKVEVEEMVISGESLESPEDASSAAAAGSPVALSAASVPEAPGPCEGLTFPSSDMDGQELDYFNIDESMRSGILISDAELDAFLKEQCLSNSNTMSAGENVNDSQLQMNQITMKGLHDENAGDIYFNAEAGAAGENGGVGNCETSDKENTENNGLSIGEKGAIPTERELSACQPDIRDELPVPSIKTQAVGGARPKQLLSLPPGTRSSKELNKPDVVDVPESEPCTANATAVSTCSADHIPDSQVSFNSNYIDIESNFEDGSSFVTANKDSLPENKRKESLVLGQKQPTWVPDSEAPNCMNCQVKFTFTKRRHHCRACGKVFCGVCCNRKCKLQYLEKEARVCVICYETINKAQAFERMMSPGGSCLKSNHSNECATDQPLQETQTSSTPSPTTLPISALKQPNVEGPCSKEQKRVWFADGILPNGEVADTTKLSSGSKRCSDDFSPVLPDVPTMINKVDRTHSPTVEKPNNGLGDIIRSEISQSPTCHTAPVERLPGNTGTEGLPMPGPFTLEDDVFVDSEEPSTPTVVPANSGLPVASISDYRLLCSVAKCVCNNISLLPDDDIGLPPLLATSGEDGSVPVVQERPSHEQIILLLEGEGFPPATFVLNANLLVNVKLVLYSSEKYWYFSTNGLHGLGQAEIIVLLQCLPNEDTVPKDIFRLFITIYKDALKGKYIENLDNLTFTESFLNSKDHGGFLFITPTFQNLDGLPVPRSPFLCGILIQKLEIPWAKVFPMRLMLRLGAEYKAYPAPLTSVRGRKPLFGEIGHTIMNLLVDLRNYQYTLHNIDQLLIHMEMGKSCIKIPRKKYSDVMKVIHSSNEHVISIGASFSTEADSHLVCVQSDGVYQTQANSATGQPRKVTGASFVVFNGALKTSSGFLAKSSIVEDGLMVQITPETMEGLRLALREQKDFRIQCGKVDAVDLREYVDICWVDSEERKNKGVISSVDGMSVEGFPSEKIKLETDFETEEKTVKCTEVFYFLKDQDISILSSSYQFAKEIAVACSAALCPHLRTLKSNRMNKIGLRVSIDTDMVEFQAGCEGQLLPQHYLNDLDSALIPVIHGGTSNSSLPLEIELAFFILENLSE.

The residue at position 120 (Ser120) is a Phosphoserine. The disordered stretch occupies residues 629-664; sequence TQAVGGARPKQLLSLPPGTRSSKELNKPDVVDVPES. A compositionally biased stretch (basic and acidic residues) spans 649–658; it reads SSKELNKPDV. Residues 735–793 form an FYVE-type zinc finger; it reads DSEAPNCMNCQVKFTFTKRRHHCRACGKVFCGVCCNRKCKLQYLEKEARVCVICYETIN. The Zn(2+) site is built by Cys741, Cys744, Cys757, Cys760, Cys765, Cys768, Cys785, and Cys788. Ser803, Ser833, Ser884, and Ser927 each carry phosphoserine. The interval 819–849 is disordered; sequence TDQPLQETQTSSTPSPTTLPISALKQPNVEG. Residues 821–838 are compositionally biased toward low complexity; that stretch reads QPLQETQTSSTPSPTTLP. A disordered region spans residues 928–949; that stretch reads PTCHTAPVERLPGNTGTEGLPM.

Interacts (via C-terminus) with TOM1 (via C-terminus); interaction is required to target TOM1 to endosomes. Does not interact with TOM1L1 or TOM1L2.

It localises to the cytoplasm. It is found in the early endosome membrane. Its function is as follows. May be involved in regulating membrane trafficking in the endosomal pathway. Overexpression induces endosome aggregation. Required to target TOM1 to endosomes. The sequence is that of Zinc finger FYVE domain-containing protein 16 (Zfyve16) from Mus musculus (Mouse).